Consider the following 88-residue polypeptide: Small ribosomal subunit protein bS16 (88 aa).

The protein belongs to the bacterial ribosomal protein bS16 family.

This is Small ribosomal subunit protein bS16 from Mycoplasmopsis pulmonis (strain UAB CTIP) (Mycoplasma pulmonis).